The sequence spans 352 residues: GTPase Obg (352 aa).

Residues 1–159 (MHFLDQAKIY…MWVWLRLKLL (159 aa)) enclose the Obg domain. The 168-residue stretch at 160-327 (ADVGLLGLPN…LLDAVLGYLP (168 aa)) folds into the OBG-type G domain. Residues 166 to 173 (GLPNAGKS), 191 to 195 (FTTLV), 212 to 215 (DIPG), 279 to 282 (NKLD), and 308 to 310 (SGA) each bind GTP. Mg(2+) contacts are provided by Ser173 and Thr193. Positions 329–352 (STSTETKGSEVEEVDEEGGEWSPI) are disordered. Over residues 339–352 (VEEVDEEGGEWSPI) the composition is skewed to acidic residues.

Belongs to the TRAFAC class OBG-HflX-like GTPase superfamily. OBG GTPase family. In terms of assembly, monomer. Mg(2+) serves as cofactor.

The protein resides in the cytoplasm. Its function is as follows. An essential GTPase which binds GTP, GDP and possibly (p)ppGpp with moderate affinity, with high nucleotide exchange rates and a fairly low GTP hydrolysis rate. Plays a role in control of the cell cycle, stress response, ribosome biogenesis and in those bacteria that undergo differentiation, in morphogenesis control. This is GTPase Obg from Erythrobacter litoralis (strain HTCC2594).